A 218-amino-acid polypeptide reads, in one-letter code: Ubiquitin-conjugating enzyme E2-24 kDa (218 aa).

Residues 3 to 148 (SSKRRIETDV…IKEYIDKYAT (146 aa)) form the UBC core domain. The Glycyl thioester intermediate role is filled by Cys-85. Positions 154–218 (QMFGGDNDSD…DDDYDEVANQ (65 aa)) are disordered. Composition is skewed to acidic residues over residues 160-183 (NDSD…EDMD) and 192-218 (DSVD…VANQ).

Belongs to the ubiquitin-conjugating enzyme family.

Its subcellular location is the cytoplasm. It catalyses the reaction S-ubiquitinyl-[E1 ubiquitin-activating enzyme]-L-cysteine + [E2 ubiquitin-conjugating enzyme]-L-cysteine = [E1 ubiquitin-activating enzyme]-L-cysteine + S-ubiquitinyl-[E2 ubiquitin-conjugating enzyme]-L-cysteine.. Its pathway is protein modification; protein ubiquitination. Its function is as follows. Catalyzes the covalent attachment of ubiquitin to other proteins. Required for the adaptation to the presence of glucose in the growth medium; mediates the degradation of enzymes involved in gluconeogenesis when cells are shifted to glucose-containing medium. Required for proteasome-dependent catabolite degradation of fructose-1,6-bisphosphatase (FBP1). This Saccharomyces cerevisiae (strain ATCC 204508 / S288c) (Baker's yeast) protein is Ubiquitin-conjugating enzyme E2-24 kDa (UBC8).